An 841-amino-acid polypeptide reads, in one-letter code: Neuronal tyrosine-phosphorylated phosphoinositide-3-kinase adapter 1 (841 aa).

Disordered regions lie at residues 1 to 45 (MNLL…PGVR), 64 to 448 (PASQ…PAAL), 655 to 679 (RAWN…TSGI), 745 to 769 (RPCS…PLPP), and 812 to 833 (LPSW…RRQH). Residues 8–25 (TKLEWRQHKEEEAKRSSS) show a composition bias toward basic and acidic residues. Residues 26 to 39 (KEVAPAGSAGPAAG) show a composition bias toward low complexity. The interval 76-186 (SAMAPRSLSC…DESCPPGPSP (111 aa)) is involved in CYFIP1- and NCKAP1-binding. Over residues 94–103 (VGGGPGGASG) the composition is skewed to gly residues. Positions 114-123 (PPAKPRRHPS) are enriched in basic residues. Over residues 167 to 176 (SPNTQLSVSF) the composition is skewed to polar residues. A compositionally biased stretch (gly residues) spans 224 to 243 (FRGGGRSGGGLAGPPLGGGG). Over residues 252 to 261 (SDSEESEAIY) the composition is skewed to acidic residues. Residues 279–295 (GPPPLTATSPPQQPHAL) are compositionally biased toward pro residues. Over residues 759 to 769 (PALPLPLPLPP) the composition is skewed to pro residues.

Belongs to the NYAP family. As to quaternary structure, interacts with ACOT9, ARHGAP26 and PIK3R2. Interacts with components of the WAVE1 complex, CYFIP1 and NCKAP1; this interaction mediates PI3K-WAVE1 association and actin cytoskeleton remodeling. In terms of processing, phosphorylated on tyrosine residues by FYN upon stimulation with CNTN5.

Functionally, activates PI3K and concomitantly recruits the WAVE1 complex to the close vicinity of PI3K and regulates neuronal morphogenesis. The chain is Neuronal tyrosine-phosphorylated phosphoinositide-3-kinase adapter 1 (NYAP1) from Homo sapiens (Human).